Reading from the N-terminus, the 733-residue chain is Protein OBERON 3 (733 aa).

A compositionally biased stretch (basic and acidic residues) spans Met-1–Arg-15. Disordered regions lie at residues Met-1–Lys-42 and Asn-118–Asn-142. The span at Pro-21–Thr-30 shows a compositional bias: polar residues. The stretch at Asn-120–Leu-153 forms a coiled coil. The PHD-type zinc-finger motif lies at Ser-436–Lys-500. The disordered stretch occupies residues Val-592–Lys-614. The stretch at Met-644 to Val-733 forms a coiled coil.

Self-interacts. Interacts with OBE1 and OBE2. Interacts with OBE4.

It localises to the nucleus. Probable transcription factor that functions redundantly with OBE4 in specification of the hypophysis and establishment of the embryonic root. Involved in the activation of ARF5/MP-dependent gene expression during embryonic root meristem initiation. Involved in shoot meristem homeostasis. In Arabidopsis thaliana (Mouse-ear cress), this protein is Protein OBERON 3.